Consider the following 239-residue polypeptide: MRIERVDDTTVKLFITYSDIEARGFSREDLWTNRKRGEEFFWSMMDEINEEEDFVVEGPLWIQVHAFEKGVEVTISKSKNEDMMNMSDDDATDQFDEQVQELLAQTLEGEDQLEELFEQRTKEKEAQGSKRQKSSARKNTRTIIVKFNDLEDVINYAYHSNPITTEFEDLLYMVDGTYYYAVHFDSHVDQEVINDSYSQLLEFAYPTDRTEVYLNDYAKIIMSHNVTAQVRRYFPETTE.

Residues 118-128 are compositionally biased toward basic and acidic residues; the sequence is EQRTKEKEAQG. The disordered stretch occupies residues 118–137; the sequence is EQRTKEKEAQGSKRQKSSAR.

It belongs to the MecA family. Homodimer.

In terms of biological role, enables the recognition and targeting of unfolded and aggregated proteins to the ClpC protease or to other proteins involved in proteolysis. The sequence is that of Adapter protein MecA from Staphylococcus aureus (strain Mu3 / ATCC 700698).